Consider the following 686-residue polypeptide: Protein-glutamine gamma-glutamyltransferase 2 (686 aa).

At alanine 2 the chain carries N-acetylalanine. Cystine bridges form between cysteine 230–cysteine 370 and cysteine 370–cysteine 371. Catalysis depends on residues cysteine 277, histidine 335, and aspartate 358. Positions 398, 400, 437, 447, and 452 each coordinate Ca(2+). An N6-acetyllysine modification is found at lysine 468. 476 to 483 (RIRVGDSM) is a binding site for GTP. Glutamate 538 serves as a coordination point for Ca(2+). Residue 579–582 (RDLY) participates in GTP binding. Residue glutamine 632 forms an Isoglutamyl lysine isopeptide (Gln-Lys) (interchain with K-?) linkage.

The protein belongs to the transglutaminase superfamily. Transglutaminase family. In terms of assembly, monomer. Interacts with phospholipase C; promoting alpha-1 adrenergic receptor signaling. Interacts with PLCD1. Ca(2+) is required as a cofactor. Disulfide bond formation inactivates the calcium-dependent acyltransferase activity. Cys-370 can form disulfide bonds with both Cys-230 and Cys-371: formation of a disulfide bond between Cys-230 and Cys-370 facilitates formation of the disulfide between Cys-370 and Cys-371, which promotes inactivation of the acyltransferase activity. May also form interchain disulfids between Cys-230 and Cys-370. Ca(2+) protects against disulfide bond formation and inactivation. In terms of processing, auto-transglutaminated: Forms covalent cross-links mediated by transglutaminase between Gln-632 and the epsilon-amino group of a lysine residue of itself or HMGB1, forming homopolymers and heteropolymers, respectively. Post-translationally, S-nitrosylated, leading to inactivation of the acyltransferase activity.

The protein resides in the cytoplasm. It localises to the cytosol. It is found in the nucleus. Its subcellular location is the chromosome. The protein localises to the secreted. The protein resides in the extracellular space. It localises to the extracellular matrix. It is found in the cell membrane. Its subcellular location is the mitochondrion. It carries out the reaction L-glutaminyl-[protein] + L-lysyl-[protein] = [protein]-L-lysyl-N(6)-5-L-glutamyl-[protein] + NH4(+). The catalysed reaction is L-glutaminyl-[protein] + serotonin = 5-serotonyl-L-glutamyl-[protein] + NH4(+). The enzyme catalyses L-glutaminyl-[protein] + dopamine = 5-dopaminyl-L-glutamyl-[protein] + NH4(+). It catalyses the reaction L-glutaminyl-[protein] + histamine = 5-histaminyl-L-glutamyl-[protein] + NH4(+). It carries out the reaction L-glutaminyl-[protein] + (R)-noradrenaline = 5-(R)-noradrenalinyl-L-glutamyl-[protein] + NH4(+). The catalysed reaction is L-glutaminyl-[protein] + H2O = L-glutamyl-[protein] + NH4(+). Acyltransferase activity is regulated by the binding of GTP and Ca(2+): inactivated by GTP, which stabilizes its closed structure, thereby obstructing the accessibility of substrates to the active sites. In contrast, Ca(2+) acts as a cofactor by inducing conformational change to the active open form. In absence of Ca(2+), Mg(2+) may bind Ca(2+)-binding sites, promoting GTP-binding and subsequent inhibition of the acyltransferase activity. Extracellularly reduced and activated by CLIC3. Calcium-dependent acyltransferase that catalyzes the formation of covalent bonds between peptide-bound glutamine and various primary amines, such as gamma-amino group of peptide-bound lysine, or mono- and polyamines, thereby producing cross-linked or aminated proteins, respectively. Involved in many biological processes, such as bone development, angiogenesis, wound healing, cellular differentiation, chromatin modification and apoptosis. Acts as a protein-glutamine gamma-glutamyltransferase by mediating the cross-linking of proteins, such as ACO2, HSPB6, FN1, HMGB1, RAP1GDS1, SLC25A4/ANT1, SPP1 and WDR54. Under physiological conditions, the protein cross-linking activity is inhibited by GTP; inhibition is relieved by Ca(2+) in response to various stresses. When secreted, catalyzes cross-linking of proteins of the extracellular matrix, such as FN1 and SPP1 resulting in the formation of scaffolds. Plays a key role during apoptosis, both by (1) promoting the cross-linking of cytoskeletal proteins resulting in condensation of the cytoplasm, and by (2) mediating cross-linking proteins of the extracellular matrix, resulting in the irreversible formation of scaffolds that stabilize the integrity of the dying cells before their clearance by phagocytosis, thereby preventing the leakage of harmful intracellular components. In addition to protein cross-linking, can use different monoamine substrates to catalyze a vast array of protein post-translational modifications: mediates aminylation of serotonin, dopamine, noradrenaline or histamine into glutamine residues of target proteins to generate protein serotonylation, dopaminylation, noradrenalinylation or histaminylation, respectively. Mediates protein serotonylation of small GTPases during activation and aggregation of platelets, leading to constitutive activation of these GTPases. Plays a key role in chromatin organization by mediating serotonylation and dopaminylation of histone H3. Catalyzes serotonylation of 'Gln-5' of histone H3 (H3Q5ser) during serotonergic neuron differentiation, thereby facilitating transcription. Acts as a mediator of neurotransmission-independent role of nuclear dopamine in ventral tegmental area (VTA) neurons: catalyzes dopaminylation of 'Gln-5' of histone H3 (H3Q5dop), thereby regulating relapse-related transcriptional plasticity in the reward system. Regulates vein remodeling by mediating serotonylation and subsequent inactivation of ATP2A2/SERCA2. Also acts as a protein deamidase by mediating the side chain deamidation of specific glutamine residues of proteins to glutamate. Catalyzes specific deamidation of protein gliadin, a component of wheat gluten in the diet. May also act as an isopeptidase cleaving the previously formed cross-links. Also able to participate in signaling pathways independently of its acyltransferase activity: acts as a signal transducer in alpha-1 adrenergic receptor-mediated stimulation of phospholipase C-delta (PLCD) activity and is required for coupling alpha-1 adrenergic agonists to the stimulation of phosphoinositide lipid metabolism. This Mus musculus (Mouse) protein is Protein-glutamine gamma-glutamyltransferase 2.